Reading from the N-terminus, the 320-residue chain is Putative olfactory receptor 2W5 pseudogene (320 aa).

Residue asparagine 5 is glycosylated (N-linked (GlcNAc...) asparagine). The next 4 helical transmembrane spans lie at 30 to 50 (VILIFCILTLVGNTAIILLLV), 58 to 78 (PMYFFLGNLSFLDLCFTASIA), 98 to 118 (VAQLYIYMMLGSTECVLLVVM), and 140 to 160 (LCLQLVTVAWCCGFLNSFIMC). A disulfide bridge connects residues cysteine 97 and cysteine 179. The disordered stretch occupies residues 267–320 (LPRSGEVPDSLLHHRHSQHQPPHLHFEEQGCEGDHEETSGVGERGWGASTRGTL). Residues 290–304 (LHFEEQGCEGDHEET) are compositionally biased toward basic and acidic residues.

The protein belongs to the G-protein coupled receptor 1 family.

It localises to the cell membrane. In terms of biological role, odorant receptor. This is Putative olfactory receptor 2W5 pseudogene from Homo sapiens (Human).